Here is a 427-residue protein sequence, read N- to C-terminus: MKLLKRLVSVFAIVLAVGSNAFAGDEVRIVIDEGVDGARPIAVVPFVGSAPEDISKIVADDLRNSGKFNPIAVSQMPQRPTSAAEVNPEAWSNIGIDAIVIGQVVPSGNGYSITYQLIDTVGASGTPGAVLMQNSYTVTNKWLRYGAHTVSDEVFEKLTAIRGAFRTRIAYVVQKNGGSQPYEVRVADYDGYNQFIVNRSAQPIMSPAWSPDGQRLAYVSFENKKSQLVVQDLNSGARKVVASFQGHNGAPAFSPDGSRLAFASSRDGVLNIYVMGANGGTPTQLTSGAGNNTEPAWSPDGNSILFTSDRSGSPQVYRMDASGGSATAVGGRGSAQISADGKTLVMINGNNNVVKQDLTTGVSEVLSTSFLGESPSLSPNGIMIIYSSTQGLGKVLQLVSADGRFKASLPGSDGQVKFPAWSPYLTK.

An N-terminal signal peptide occupies residues 1 to 23 (MKLLKRLVSVFAIVLAVGSNAFA).

This sequence belongs to the TolB family. In terms of assembly, the Tol-Pal system is composed of five core proteins: the inner membrane proteins TolA, TolQ and TolR, the periplasmic protein TolB and the outer membrane protein Pal. They form a network linking the inner and outer membranes and the peptidoglycan layer.

It is found in the periplasm. Part of the Tol-Pal system, which plays a role in outer membrane invagination during cell division and is important for maintaining outer membrane integrity. The sequence is that of Tol-Pal system protein TolB from Haemophilus influenzae (strain 86-028NP).